We begin with the raw amino-acid sequence, 221 residues long: Phosphoglycolate phosphatase (221 aa).

The active-site Nucleophile is Asp-10. Residues Asp-10, Asp-12, and Asp-168 each contribute to the Mg(2+) site.

It belongs to the HAD-like hydrolase superfamily. CbbY/CbbZ/Gph/YieH family. Mg(2+) serves as cofactor.

The catalysed reaction is 2-phosphoglycolate + H2O = glycolate + phosphate. It participates in organic acid metabolism; glycolate biosynthesis; glycolate from 2-phosphoglycolate: step 1/1. In terms of biological role, specifically catalyzes the dephosphorylation of 2-phosphoglycolate. Is involved in the dissimilation of the intracellular 2-phosphoglycolate formed during the DNA repair of 3'-phosphoglycolate ends, a major class of DNA lesions induced by oxidative stress. The sequence is that of Phosphoglycolate phosphatase from Xanthomonas campestris pv. campestris (strain 8004).